The chain runs to 43 residues: METATLITIFLSGLLVSFTGYALYTAFGQPSQQLRDPFEEHGD.

The chain crosses the membrane as a helical span at residues 7–29 (ITIFLSGLLVSFTGYALYTAFGQ).

The protein belongs to the PsbN family.

It is found in the plastid membrane. In terms of biological role, may play a role in photosystem I and II biogenesis. The chain is Protein PsbN from Cuscuta reflexa (Southern Asian dodder).